The primary structure comprises 152 residues: Deoxyuridine 5'-triphosphate nucleotidohydrolase (152 aa).

Substrate is bound by residues 72 to 74, asparagine 85, and 89 to 91; these read RSG and TID.

This sequence belongs to the dUTPase family. Requires Mg(2+) as cofactor.

The enzyme catalyses dUTP + H2O = dUMP + diphosphate + H(+). It functions in the pathway pyrimidine metabolism; dUMP biosynthesis; dUMP from dCTP (dUTP route): step 2/2. Functionally, this enzyme is involved in nucleotide metabolism: it produces dUMP, the immediate precursor of thymidine nucleotides and it decreases the intracellular concentration of dUTP so that uracil cannot be incorporated into DNA. This Rhodopseudomonas palustris (strain BisB5) protein is Deoxyuridine 5'-triphosphate nucleotidohydrolase.